We begin with the raw amino-acid sequence, 101 residues long: Small ribosomal subunit protein uS14 (101 aa).

It belongs to the universal ribosomal protein uS14 family. In terms of assembly, part of the 30S ribosomal subunit. Contacts proteins S3 and S10.

Binds 16S rRNA, required for the assembly of 30S particles and may also be responsible for determining the conformation of the 16S rRNA at the A site. The protein is Small ribosomal subunit protein uS14 of Albidiferax ferrireducens (strain ATCC BAA-621 / DSM 15236 / T118) (Rhodoferax ferrireducens).